Reading from the N-terminus, the 183-residue chain is MFTCKVNEHITIRLLEPKDAERLAELIIQNQQRLGKWLFFAENPSSADTYRETIIPDWRRQYADLNGIEAGLLYDGSLCGMISLHNLDQVNRKAEIGYWIAKEFEGKGIITAACRKLITYAFEELELNRVAICAAVGNEKSRAVPERIGFLEEGKARDGLYVNGMHHDLVYYSLLKREWEGEK.

The N-acetyltransferase domain occupies 10–176 (ITIRLLEPKD…HDLVYYSLLK (167 aa)).

It belongs to the acetyltransferase family. As to quaternary structure, homohexamer, and homodimer.

Its function is as follows. Putative N-acetyltransferase. May act on ribosomal proteins (Potential). The polypeptide is Putative ribosomal N-acetyltransferase YdaF (ydaF) (Bacillus subtilis (strain 168)).